Reading from the N-terminus, the 476-residue chain is Glutamate--tRNA ligase 1 (476 aa).

The 'HIGH' region motif lies at 9 to 19 (PSPTGFLHIGG). Positions 238-242 (KLSKR) match the 'KMSKS' region motif. Lysine 241 serves as a coordination point for ATP.

Belongs to the class-I aminoacyl-tRNA synthetase family. Glutamate--tRNA ligase type 1 subfamily. In terms of assembly, monomer.

The protein localises to the cytoplasm. The catalysed reaction is tRNA(Glu) + L-glutamate + ATP = L-glutamyl-tRNA(Glu) + AMP + diphosphate. Functionally, catalyzes the attachment of glutamate to tRNA(Glu) in a two-step reaction: glutamate is first activated by ATP to form Glu-AMP and then transferred to the acceptor end of tRNA(Glu). The sequence is that of Glutamate--tRNA ligase 1 from Bartonella bacilliformis (strain ATCC 35685 / KC583 / Herrer 020/F12,63).